The primary structure comprises 285 residues: Tumor necrosis factor ligand superfamily member 13B (285 aa).

At Met-1 to Lys-46 the chain is on the cytoplasmic side. Residues Leu-47–Tyr-67 traverse the membrane as a helical; Signal-anchor for type II membrane protein segment. At Gln-68–Leu-285 the chain is on the extracellular side. The tract at residues Ile-114–Pro-138 is disordered. Asn-124 carries N-linked (GlcNAc...) asparagine glycosylation. Residues Asp-145–Leu-284 enclose the THD domain. A disulfide bridge links Cys-232 with Cys-245. Residue Asn-242 is glycosylated (N-linked (GlcNAc...) (high mannose) asparagine).

It belongs to the tumor necrosis factor family. In terms of assembly, homotrimer. Isoform 2 heteromultimerizes with isoform 1, probably limiting the amount of functional isoform 1 on the cell surface. Isoform 3 is unlikely form trimers or bind to BAFF receptors. In terms of processing, the soluble form derives from the membrane form by proteolytic processing. Post-translationally, isoform 2 is not efficiently shed from the membrane unlike isoform 1. N-glycosylated. Abundantly expressed in peripheral blood Leukocytes and is specifically expressed in monocytes and macrophages. Also found in the spleen, lymph node, bone marrow, T-cells and dendritic cells. A lower expression seen in placenta, heart, lung, fetal liver, thymus, and pancreas. Isoform 2 is expressed in many myeloid cell lines.

It localises to the cell membrane. It is found in the secreted. Cytokine that binds to TNFRSF13B/TACI and TNFRSF17/BCMA. TNFSF13/APRIL binds to the same 2 receptors. Together, they form a 2 ligands -2 receptors pathway involved in the stimulation of B- and T-cell function and the regulation of humoral immunity. A third B-cell specific BAFF-receptor (BAFFR/BR3) promotes the survival of mature B-cells and the B-cell response. Its function is as follows. Isoform 2 seems to inhibit isoform 1 secretion and bioactivity. In terms of biological role, acts as a transcription factor for its own parent gene, in association with NF-kappa-B p50 subunit, at least in autoimmune and proliferative B-cell diseases. The presence of Delta4BAFF is essential for soluble BAFF release by IFNG/IFN-gamma-stimulated monocytes and for B-cell survival. It can directly or indirectly regulate the differential expression of a large number of genes involved in the innate immune response and the regulation of apoptosis. This chain is Tumor necrosis factor ligand superfamily member 13B (TNFSF13B), found in Homo sapiens (Human).